A 435-amino-acid polypeptide reads, in one-letter code: GTPase Der (435 aa).

2 EngA-type G domains span residues 3–168 (PTVA…PEDD) and 176–351 (VKLT…QNRR). Residues 9-16 (GRPNVGKS), 56-60 (DTGGY), 120-123 (NKVD), 182-189 (GRPNVGKS), 229-233 (DTAGL), and 294-297 (NKWD) contribute to the GTP site. Residues 352–435 (MKIDTSRLNN…TPIELKFRRK (84 aa)) form the KH-like domain.

The protein belongs to the TRAFAC class TrmE-Era-EngA-EngB-Septin-like GTPase superfamily. EngA (Der) GTPase family. Associates with the 50S ribosomal subunit.

Functionally, GTPase that plays an essential role in the late steps of ribosome biogenesis. The polypeptide is GTPase Der (Chloroherpeton thalassium (strain ATCC 35110 / GB-78)).